A 173-amino-acid polypeptide reads, in one-letter code: CKLF-like MARVEL transmembrane domain-containing protein 8 (173 aa).

One can recognise an MARVEL domain in the interval 36–168 (FLRTPPGLLI…NTYFSFIAWR (133 aa)). 4 helical membrane passes run 41–61 (PGLL…LIAG), 70–90 (FGWV…FLIV), 105–125 (TTVG…AAIV), and 147–167 (FFAF…FIAW).

The protein belongs to the chemokine-like factor family.

Its subcellular location is the membrane. The chain is CKLF-like MARVEL transmembrane domain-containing protein 8 (Cmtm8) from Mus musculus (Mouse).